The following is a 222-amino-acid chain: MLANSREELVEVFDALDAELDRLDEVSFEVLTTPERLRSLERLECLVRRLPAVGHTLINQLDTQASEEELGGTLCCALANRLRITKPDAALRIADAADLGPRRALTGEPLAPQLTATATAQRQGLIGEAHIKVIRALFRPPARRGGCVHPPGRRSRPGRQSRSISSRRAGPLRPAGHGLATPRRRPHRHRTRPQTRHHPEQPAIRRHVTAKWLPDPPSAGHL.

Residues 142–222 (ARRGGCVHPP…LPDPPSAGHL (81 aa)) form a disordered region. Residues 160 to 169 (QSRSISSRRA) show a composition bias toward low complexity. Basic residues predominate over residues 182–196 (PRRRPHRHRTRPQTR).

The protein belongs to the Rv1128c/1148c/1588c/1702c/1945/3466 family.

This is an uncharacterized protein from Mycobacterium tuberculosis (strain CDC 1551 / Oshkosh).